Here is a 282-residue protein sequence, read N- to C-terminus: 3-oxoadipate CoA-transferase subunit A (282 aa).

It belongs to the 3-oxoacid CoA-transferase subunit A family. In terms of assembly, heterotetramer composed of 2 A and 2 B subunits.

It catalyses the reaction 3-oxoadipate + succinyl-CoA = 3-oxoadipyl-CoA + succinate. The protein operates within aromatic compound metabolism; beta-ketoadipate pathway; acetyl-CoA and succinyl-CoA from 3-oxoadipate: step 1/2. Functionally, catalyzes the CoA transfer from succinate to 3-oxoadipate (beta-ketoadipate). This is 3-oxoadipate CoA-transferase subunit A (catI) from Pseudomonas knackmussii (strain DSM 6978 / CCUG 54928 / LMG 23759 / B13).